We begin with the raw amino-acid sequence, 326 residues long: UDP-3-O-acylglucosamine N-acyltransferase (326 aa).

The active-site Proton acceptor is the His225.

The protein belongs to the transferase hexapeptide repeat family. LpxD subfamily. Homotrimer.

The catalysed reaction is a UDP-3-O-[(3R)-3-hydroxyacyl]-alpha-D-glucosamine + a (3R)-hydroxyacyl-[ACP] = a UDP-2-N,3-O-bis[(3R)-3-hydroxyacyl]-alpha-D-glucosamine + holo-[ACP] + H(+). It participates in bacterial outer membrane biogenesis; LPS lipid A biosynthesis. Catalyzes the N-acylation of UDP-3-O-acylglucosamine using 3-hydroxyacyl-ACP as the acyl donor. Is involved in the biosynthesis of lipid A, a phosphorylated glycolipid that anchors the lipopolysaccharide to the outer membrane of the cell. The chain is UDP-3-O-acylglucosamine N-acyltransferase from Acidovorax ebreus (strain TPSY) (Diaphorobacter sp. (strain TPSY)).